Consider the following 204-residue polypeptide: Lipid A acyltransferase PagP (204 aa).

Residues 1–25 form the signal peptide; it reads MSYKHLISACIFSSLCLGQVNAVLA. Residues His76, Asp119, and Ser120 contribute to the active site.

Belongs to the lipid A palmitoyltransferase family. Homodimer.

The protein localises to the cell outer membrane. The catalysed reaction is a lipid A + a 1,2-diacyl-sn-glycero-3-phosphocholine = a hepta-acyl lipid A + a 2-acyl-sn-glycero-3-phosphocholine. The enzyme catalyses a lipid IVA + a 1,2-diacyl-sn-glycero-3-phosphocholine = a lipid IVB + a 2-acyl-sn-glycero-3-phosphocholine. It carries out the reaction a lipid IIA + a 1,2-diacyl-sn-glycero-3-phosphocholine = a lipid IIB + a 2-acyl-sn-glycero-3-phosphocholine. Transfers a fatty acid residue from the sn-1 position of a phospholipid to the N-linked hydroxyfatty acid chain on the proximal unit of lipid A or its precursors. This is Lipid A acyltransferase PagP from Yersinia enterocolitica serotype O:8 / biotype 1B (strain NCTC 13174 / 8081).